Consider the following 201-residue polypeptide: Pyridoxal 5'-phosphate synthase subunit PdxT (201 aa).

G51–S53 lines the L-glutamine pocket. The active-site Nucleophile is the C83. Residues R112 and I141–R142 each bind L-glutamine. Active-site charge relay system residues include H182 and E184.

It belongs to the glutaminase PdxT/SNO family. In the presence of PdxS, forms a dodecamer of heterodimers. Only shows activity in the heterodimer.

It catalyses the reaction aldehydo-D-ribose 5-phosphate + D-glyceraldehyde 3-phosphate + L-glutamine = pyridoxal 5'-phosphate + L-glutamate + phosphate + 3 H2O + H(+). The catalysed reaction is L-glutamine + H2O = L-glutamate + NH4(+). It functions in the pathway cofactor biosynthesis; pyridoxal 5'-phosphate biosynthesis. Its function is as follows. Catalyzes the hydrolysis of glutamine to glutamate and ammonia as part of the biosynthesis of pyridoxal 5'-phosphate. The resulting ammonia molecule is channeled to the active site of PdxS. This chain is Pyridoxal 5'-phosphate synthase subunit PdxT, found in Thermobifida fusca (strain YX).